A 306-amino-acid chain; its full sequence is 4-diphosphocytidyl-2-C-methyl-D-erythritol kinase (306 aa).

Lys11 is a catalytic residue. 98-108 provides a ligand contact to ATP; it reads PIAGGMGGGSA. Asp140 is an active-site residue.

Belongs to the GHMP kinase family. IspE subfamily.

It carries out the reaction 4-CDP-2-C-methyl-D-erythritol + ATP = 4-CDP-2-C-methyl-D-erythritol 2-phosphate + ADP + H(+). Its pathway is isoprenoid biosynthesis; isopentenyl diphosphate biosynthesis via DXP pathway; isopentenyl diphosphate from 1-deoxy-D-xylulose 5-phosphate: step 3/6. Catalyzes the phosphorylation of the position 2 hydroxy group of 4-diphosphocytidyl-2C-methyl-D-erythritol. The sequence is that of 4-diphosphocytidyl-2-C-methyl-D-erythritol kinase from Leifsonia xyli subsp. xyli (strain CTCB07).